The following is a 343-amino-acid chain: Protein pelota homolog (343 aa).

It belongs to the eukaryotic release factor 1 family. Pelota subfamily. Monomer. The cofactor is a divalent metal cation.

It localises to the cytoplasm. May function in recognizing stalled ribosomes, interact with stem-loop structures in stalled mRNA molecules, and effect endonucleolytic cleavage of the mRNA. May play a role in the release non-functional ribosomes and degradation of damaged mRNAs. Has endoribonuclease activity. The chain is Protein pelota homolog from Cenarchaeum symbiosum (strain A).